The following is a 172-amino-acid chain: 3-hydroxydecanoyl-[acyl-carrier-protein] dehydratase (172 aa).

Residue H70 is part of the active site.

This sequence belongs to the thioester dehydratase family. FabA subfamily. Homodimer.

The protein localises to the cytoplasm. The enzyme catalyses a (3R)-hydroxyacyl-[ACP] = a (2E)-enoyl-[ACP] + H2O. The catalysed reaction is (3R)-hydroxydecanoyl-[ACP] = (2E)-decenoyl-[ACP] + H2O. It catalyses the reaction (2E)-decenoyl-[ACP] = (3Z)-decenoyl-[ACP]. Its pathway is lipid metabolism; fatty acid biosynthesis. In terms of biological role, necessary for the introduction of cis unsaturation into fatty acids. Catalyzes the dehydration of (3R)-3-hydroxydecanoyl-ACP to E-(2)-decenoyl-ACP and then its isomerization to Z-(3)-decenoyl-ACP. Can catalyze the dehydratase reaction for beta-hydroxyacyl-ACPs with saturated chain lengths up to 16:0, being most active on intermediate chain length. The chain is 3-hydroxydecanoyl-[acyl-carrier-protein] dehydratase from Xylella fastidiosa (strain M23).